Reading from the N-terminus, the 328-residue chain is Malate dehydrogenase (328 aa).

11–17 (GAAGQIG) is a binding site for NAD(+). Positions 94 and 100 each coordinate substrate. NAD(+) contacts are provided by residues Asn107, Gln114, and 131-133 (VGN). Residues Asn133 and Arg164 each contribute to the substrate site. His189 functions as the Proton acceptor in the catalytic mechanism.

This sequence belongs to the LDH/MDH superfamily. MDH type 2 family.

It carries out the reaction (S)-malate + NAD(+) = oxaloacetate + NADH + H(+). In terms of biological role, catalyzes the reversible oxidation of malate to oxaloacetate. This chain is Malate dehydrogenase, found in Stenotrophomonas maltophilia (strain R551-3).